Reading from the N-terminus, the 788-residue chain is MGIELLCFFFLFLGRDDHVRGGCAMEGAETCGDCLLIGPQCAWCSQENFTHPSGVSERCDTPANLLAKGCQLTFIENPVSQVEILKNKPLSIGRQKNSSDIVQIAPQNLILKLRPGSEQTLQVQVRQTEDYPVDLYYLMDLSASMDDDLNTIKELGSLLSKEMSKLTSNFRLGFGSFVEKPVSPFMKTTPEEIANPCSSIPYICLPTFGFKHILPLTNDAERFNEIVKKQKISANIDTPEGGFDAIMQAAVCKEKIGWRNDSLHLLVFVSDADSHFGMDSKLAGIVIPNDGLCHLDSKNEYSMSTVMEYPTIGQLIDKVVQNNVLLIFAVTQEQVPLYENYAKLIPGATVGLLHKDSGNILQLIISAYEELRSEVELEVLGDTEGLNLSFTAVCNNGTLFPHQKKCLHMKVGETASFNVTVSIPNCERKSRHVIIKPVGLGDTLEILVSPECSCDCQKEVEVNSSKCHNGNGSYQCGVCACNPGHMGPHCECGEDTLSTDSCKETPDHPSCSGRGDCYCGQCICHLSPYGNIYGPYCQCDNFSCVRHKGLLCGDNGDCECGECVCRSGWTGEYCNCTTSTDTCISEDGTLCSGRGDCVCGKCVCTNPGASGPTCERCPTCSDPCNSKRSCIECHLSADGQPGEECVDKCKLAGVTISKEADFSKDSSVSCSLQGENECLITFLISTDNEGKTIIHNISEKDCPKPPNIPMIMLGVSLAILLIGVVLLCIWKLLVSFHDRKEVAKFEAERSKAKWQTGTNPLYRGSTSTFKNVTYKHRDKLKTDLSTDG.

An N-terminal signal peptide occupies residues 1–21 (MGIELLCFFFLFLGRDDHVRG). One can recognise a PSI domain in the interval 22 to 71 (GCAMEGAETCGDCLLIGPQCAWCSQENFTHPSGVSERCDTPANLLAKGCQ). The Extracellular portion of the chain corresponds to 22–709 (GCAMEGAETC…KDCPKPPNIP (688 aa)). 19 disulfides stabilise this stretch: Cys23-Cys41, Cys31-Cys454, Cys34-Cys59, Cys44-Cys70, Cys197-Cys204, Cys252-Cys293, Cys394-Cys406, Cys426-Cys452, Cys456-Cys476, Cys467-Cys479, Cys481-Cys490, Cys492-Cys519, Cys502-Cys517, Cys511-Cys522, Cys524-Cys537, Cys539-Cys560, Cys544-Cys558, Cys552-Cys563, and Cys565-Cys574. 2 N-linked (GlcNAc...) asparagine glycosylation sites follow: Asn48 and Asn97. Residues 131–371 (YPVDLYYLMD…QLIISAYEEL (241 aa)) form the VWFA domain. Positions 140, 142, and 144 each coordinate Mg(2+). Ca(2+)-binding residues include Ser144, Asp147, Asp148, and Glu179. 4 residues coordinate Ca(2+): Asn235, Asp237, Pro239, and Glu240. Mg(2+) is bound at residue Glu240. An N-linked (GlcNAc...) asparagine glycan is attached at Asn260. Ca(2+)-binding residues include Asp271 and Lys355. N-linked (GlcNAc...) asparagine glycosylation is found at Asn387, Asn396, and Asn418. I-EGF domains follow at residues 456–491 (CQKEVEVNSSKCHNGNGSYQCGVCACNPGHMGPHCE), 492–538 (CGED…PYCQ), 539–575 (CDNFSCVRHKGLLCGDNGDCECGECVCRSGWTGEYCN), and 576–615 (CTTSTDTCISEDGTLCSGRGDCVCGKCVCTNPGASGPTCE). N-linked (GlcNAc...) asparagine glycosylation is found at Asn463 and Asn471. Asn541 carries an N-linked (GlcNAc...) asparagine glycan. Asn575 carries an N-linked (GlcNAc...) asparagine glycan. Intrachain disulfides connect Cys576–Cys599, Cys583–Cys597, Cys591–Cys602, Cys604–Cys614, Cys617–Cys620, Cys624–Cys670, Cys630–Cys649, Cys633–Cys645, and Cys678–Cys702. Asn696 carries N-linked (GlcNAc...) asparagine glycosylation. A helical membrane pass occupies residues 710 to 730 (MIMLGVSLAILLIGVVLLCIW). The interaction with HAX1 stretch occupies residues 731-758 (KLLVSFHDRKEVAKFEAERSKAKWQTGT). Residues 731-788 (KLLVSFHDRKEVAKFEAERSKAKWQTGTNPLYRGSTSTFKNVTYKHRDKLKTDLSTDG) lie on the Cytoplasmic side of the membrane.

Belongs to the integrin beta chain family. As to quaternary structure, heterodimer of an alpha and a beta subunit. Interacts with FLNB. Interacts with HAX1. ITGAV:ITGB6 interacts with FBN1. ITGAV:ITGB6 interacts with TGFB1.

Its subcellular location is the cell membrane. It localises to the cell junction. The protein resides in the focal adhesion. Integrin alpha-V:beta-6 (ITGAV:ITGB6) is a receptor for fibronectin and cytotactin. It recognizes the sequence R-G-D in its ligands. ITGAV:ITGB6 acts as a receptor for fibrillin-1 (FBN1) and mediates R-G-D-dependent cell adhesion to FBN1. Integrin alpha-V:beta-6 (ITGAV:ITGB6) mediates R-G-D-dependent release of transforming growth factor beta-1 (TGF-beta-1) from regulatory Latency-associated peptide (LAP), thereby playing a key role in TGF-beta-1 activation. The polypeptide is Integrin beta-6 (ITGB6) (Cavia porcellus (Guinea pig)).